We begin with the raw amino-acid sequence, 202 residues long: Small ribosomal subunit protein uS4c (202 aa).

An S4 RNA-binding domain is found at 90-153; it reads MRLDNVTFRL…KSETIISKNI (64 aa).

It belongs to the universal ribosomal protein uS4 family. As to quaternary structure, part of the 30S ribosomal subunit. Contacts protein S5. The interaction surface between S4 and S5 is involved in control of translational fidelity.

Its subcellular location is the plastid. The protein localises to the chloroplast. One of the primary rRNA binding proteins, it binds directly to 16S rRNA where it nucleates assembly of the body of the 30S subunit. In terms of biological role, with S5 and S12 plays an important role in translational accuracy. The sequence is that of Small ribosomal subunit protein uS4c (rps4) from Hypnum cupressiforme (Cypress-leaved plait-moss).